The following is a 144-amino-acid chain: Large ribosomal subunit protein uL15 (144 aa).

Residues 1 to 58 (MRLNTLSPAAGSKPSKKRVGRGIGSGLGKTGGRGHKGQKSRSGGSVRPGFEGGQMPLK) form a disordered region. Gly residues predominate over residues 21-31 (RGIGSGLGKTG).

This sequence belongs to the universal ribosomal protein uL15 family. Part of the 50S ribosomal subunit.

Its function is as follows. Binds to the 23S rRNA. In Vibrio atlanticus (strain LGP32) (Vibrio splendidus (strain Mel32)), this protein is Large ribosomal subunit protein uL15.